A 300-amino-acid polypeptide reads, in one-letter code: Small ribosomal subunit protein uS4m (300 aa).

Residues 146–209 enclose the S4 RNA-binding domain; it reads KRVDMVLLRS…MKRKLLKRLK (64 aa).

Belongs to the universal ribosomal protein uS4 family.

Its subcellular location is the mitochondrion. This chain is Small ribosomal subunit protein uS4m (mrps4), found in Dictyostelium discoideum (Social amoeba).